Here is a 419-residue protein sequence, read N- to C-terminus: MFDKSQTLAKVDAEIYKAIVLEETRQETHIELIASENYTSPAVMETQGSKLTNKYAEGYPCKRYYGGCEYVDMVEQLAIDRAKTLFGADYANVQPHSGSQANAAVFQALLVPGDTILGMSLAHGGHLTHGATPSFSGKNFNSIQYGLNQKTGEIDYEQVEVLAKRYKPKMIIAGFSAYSRMVDWQRFREIADSVGAYLMVDMAHVAGLIATGEYPSPVAIADVTTTTTHKTLRGPRGGLILAKSNKTIEKKLNAAIFPGIQGGPLMHIIAAKAVSFKEAMSDEYKTYQKQVKINAQVMANTFIKRGFDVVSGGTDNHLFLVSFIDQGLTGKAVDTALGSAYITVNMNAVPNDPNPPFVTSGIRVGTPSVTTRGFNEIDCSDLASWMCDICDDLGNQEVIYKIRGRVVSLCAKYPVYLDD.

(6S)-5,6,7,8-tetrahydrofolate contacts are provided by residues Leu121 and Gly125–Leu127. Lys230 is modified (N6-(pyridoxal phosphate)lysine).

The protein belongs to the SHMT family. Homodimer. The cofactor is pyridoxal 5'-phosphate.

Its subcellular location is the cytoplasm. The enzyme catalyses (6R)-5,10-methylene-5,6,7,8-tetrahydrofolate + glycine + H2O = (6S)-5,6,7,8-tetrahydrofolate + L-serine. The protein operates within one-carbon metabolism; tetrahydrofolate interconversion. It participates in amino-acid biosynthesis; glycine biosynthesis; glycine from L-serine: step 1/1. Its function is as follows. Catalyzes the reversible interconversion of serine and glycine with tetrahydrofolate (THF) serving as the one-carbon carrier. This reaction serves as the major source of one-carbon groups required for the biosynthesis of purines, thymidylate, methionine, and other important biomolecules. Also exhibits THF-independent aldolase activity toward beta-hydroxyamino acids, producing glycine and aldehydes, via a retro-aldol mechanism. This Vesicomyosocius okutanii subsp. Calyptogena okutanii (strain HA) protein is Serine hydroxymethyltransferase.